The primary structure comprises 109 residues: Tyrosine-protein phosphatase 4 (109 aa).

The 109-residue stretch at 1–109 folds into the Tyrosine-protein phosphatase domain; that stretch reads SKSASIVMLT…QNSGNHPIVI (109 aa). E78 provides a ligand contact to substrate.

This sequence belongs to the protein-tyrosine phosphatase family.

It catalyses the reaction O-phospho-L-tyrosyl-[protein] + H2O = L-tyrosyl-[protein] + phosphate. The chain is Tyrosine-protein phosphatase 4 (STY-4) from Styela plicata (Wrinkled sea squirt).